A 109-amino-acid polypeptide reads, in one-letter code: Putative double-stranded DNA mimic protein KPK_2119 (109 aa).

This sequence belongs to the putative dsDNA mimic protein family.

Functionally, may act as a double-stranded DNA (dsDNA) mimic. Probably regulates the activity of a dsDNA-binding protein. This Klebsiella pneumoniae (strain 342) protein is Putative double-stranded DNA mimic protein KPK_2119.